Reading from the N-terminus, the 346-residue chain is Histidinol-phosphate aminotransferase (346 aa).

N6-(pyridoxal phosphate)lysine is present on Lys206.

Belongs to the class-II pyridoxal-phosphate-dependent aminotransferase family. Histidinol-phosphate aminotransferase subfamily. Homodimer. The cofactor is pyridoxal 5'-phosphate.

The catalysed reaction is L-histidinol phosphate + 2-oxoglutarate = 3-(imidazol-4-yl)-2-oxopropyl phosphate + L-glutamate. Its pathway is amino-acid biosynthesis; L-histidine biosynthesis; L-histidine from 5-phospho-alpha-D-ribose 1-diphosphate: step 7/9. The chain is Histidinol-phosphate aminotransferase from Bacteroides thetaiotaomicron (strain ATCC 29148 / DSM 2079 / JCM 5827 / CCUG 10774 / NCTC 10582 / VPI-5482 / E50).